Consider the following 301-residue polypeptide: Glycine--tRNA ligase alpha subunit (301 aa).

Belongs to the class-II aminoacyl-tRNA synthetase family. Tetramer of two alpha and two beta subunits.

It is found in the cytoplasm. The enzyme catalyses tRNA(Gly) + glycine + ATP = glycyl-tRNA(Gly) + AMP + diphosphate. The chain is Glycine--tRNA ligase alpha subunit from Pseudoalteromonas atlantica (strain T6c / ATCC BAA-1087).